A 595-amino-acid polypeptide reads, in one-letter code: Proline--tRNA ligase (595 aa).

Belongs to the class-II aminoacyl-tRNA synthetase family. ProS type 1 subfamily. As to quaternary structure, homodimer.

Its subcellular location is the cytoplasm. It catalyses the reaction tRNA(Pro) + L-proline + ATP = L-prolyl-tRNA(Pro) + AMP + diphosphate. Catalyzes the attachment of proline to tRNA(Pro) in a two-step reaction: proline is first activated by ATP to form Pro-AMP and then transferred to the acceptor end of tRNA(Pro). As ProRS can inadvertently accommodate and process non-cognate amino acids such as alanine and cysteine, to avoid such errors it has two additional distinct editing activities against alanine. One activity is designated as 'pretransfer' editing and involves the tRNA(Pro)-independent hydrolysis of activated Ala-AMP. The other activity is designated 'posttransfer' editing and involves deacylation of mischarged Ala-tRNA(Pro). The misacylated Cys-tRNA(Pro) is not edited by ProRS. The protein is Proline--tRNA ligase of Treponema denticola (strain ATCC 35405 / DSM 14222 / CIP 103919 / JCM 8153 / KCTC 15104).